A 1035-amino-acid polypeptide reads, in one-letter code: Beta-galactosidase (1035 aa).

Substrate contacts are provided by asparagine 101 and aspartate 199. Aspartate 199 lines the Na(+) pocket. Mg(2+) contacts are provided by glutamate 415, histidine 417, and glutamate 460. Substrate-binding positions include glutamate 460 and 540 to 543 (EYAH). Catalysis depends on glutamate 460, which acts as the Proton donor. Catalysis depends on glutamate 540, which acts as the Nucleophile. Residue asparagine 600 participates in Mg(2+) binding. Residues phenylalanine 604 and asparagine 607 each contribute to the Na(+) site. Substrate is bound by residues asparagine 607 and tryptophan 1011.

This sequence belongs to the glycosyl hydrolase 2 family. Homotetramer. It depends on Mg(2+) as a cofactor. Na(+) serves as cofactor.

It catalyses the reaction Hydrolysis of terminal non-reducing beta-D-galactose residues in beta-D-galactosides.. This Psychromonas ingrahamii (strain DSM 17664 / CCUG 51855 / 37) protein is Beta-galactosidase.